We begin with the raw amino-acid sequence, 1044 residues long: Diacylglycerol lipase-alpha (1044 aa).

The Cytoplasmic portion of the chain corresponds to 1-22 (MPGIVVFRRRWSVGSDDLVLPA). A helical membrane pass occupies residues 23-43 (IFLFLLHTTWFVILSVVLFGL). At 44-60 (VYNPHEACSLNLVDHGR) the chain is on the extracellular side. The helical transmembrane segment at 61–81 (GYLGILLSCMIAEMAIIWLSM) threads the bilayer. Topologically, residues 82-101 (RGGILYTEPRDSMQYVLYVR) are cytoplasmic. Residues 102–122 (LAILVIEFIYAIVGIVWLTQY) form a helical membrane-spanning segment. Over 123–136 (YTSCNDLTAKNVTL) the chain is Extracellular. An N-linked (GlcNAc...) asparagine glycan is attached at Asn133. Residues 137–157 (GMVVCNWVVILSVCITVLCVF) traverse the membrane as a helical segment. Topologically, residues 158–1044 (DPTGRTFVKL…KQDDLVISAR (887 aa)) are cytoplasmic. Catalysis depends on charge relay system residues Ser472 and Asp524. Residues Ser728, Ser730, Ser733, Ser744, Ser784, Ser786, Ser808, Ser810, Ser835, Ser849, and Ser954 each carry the phosphoserine modification. Residues 848–905 (LSKHSQDTQPLEAALGSGGVTPERPPSAANDEEEAAGGSEGGGVAPRGELALHNGRLG) form a disordered region. The disordered stretch occupies residues 1013–1044 (QECLATDKIRTSTPTGHGASPTKQDDLVISAR). At Thr1025 the chain carries Phosphothreonine.

It belongs to the AB hydrolase superfamily. Lipase family. Interacts (via C-terminal) with CAMK2A; leading to the phosphorylation and inhibition of DAGLA enzymatic activity. Interacts (via PPXXF motif) with HOMER1 and HOMER2; this interaction is required for DAGLA membrane localization. Ca(2+) is required as a cofactor. Post-translationally, phosphorylated at Ser-784 and Ser-810 by CAMK2A; phosphorylation by CAMK2A inhibits diacylglycerol lipase activity.

The protein localises to the cell membrane. The protein resides in the cell projection. It localises to the dendritic spine membrane. Its subcellular location is the postsynaptic density membrane. It is found in the early endosome membrane. It catalyses the reaction a 1,2-diacyl-sn-glycerol + H2O = a 2-acylglycerol + a fatty acid + H(+). The catalysed reaction is 1-octadecanoyl-2-(5Z,8Z,11Z,14Z-eicosatetraenoyl)-sn-glycerol + H2O = 2-(5Z,8Z,11Z,14Z-eicosatetraenoyl)-glycerol + octadecanoate + H(+). The enzyme catalyses 1,2-di-(9Z-octadecenoyl)-sn-glycerol + H2O = 2-(9Z-octadecenoyl)-glycerol + (9Z)-octadecenoate + H(+). It carries out the reaction 1-(9Z-octadecenoyl)-2-(5Z,8Z,11Z,14Z-eicosatetraenoyl)-sn-glycerol + H2O = 2-(5Z,8Z,11Z,14Z-eicosatetraenoyl)-glycerol + (9Z)-octadecenoate + H(+). It catalyses the reaction 1-(9Z-octadecenoyl)-2-octadecanoyl-sn-glycerol + H2O = 2-octadecanoylglycerol + (9Z)-octadecenoate + H(+). The catalysed reaction is 1-(9Z-octadecenoyl)-2-(9Z,12Z-octadecadienoyl)-sn-glycerol + H2O = 2-(9Z,12Z-octadecadienoyl)-glycerol + (9Z)-octadecenoate + H(+). The enzyme catalyses 1-(9Z-octadecenoyl)-2-O-(5Z,8Z,11Z,14Z-eicosatetraenyl)-sn-glycerol + H2O = 2-O-(5Z,8Z,11Z,14Z)-eicosatetraenylglycerol + (9Z)-octadecenoate + H(+). With respect to regulation, inhibited by 1,2,3-triazole urea covalent inhibitors KT172, DH376 and DO34. Inhibited by p-hydroxy-mercuri-benzoate and HgCl(2), but not to PMSF. Also inhibited by RHC80267. Diacylglycerol lipase activity is inhibited by the phosphorylation of Ser-784 and Ser-810 by CAMK2A. Serine hydrolase that hydrolyzes arachidonic acid-esterified diacylglycerols (DAGs) to produce the principal endocannabinoid, 2-arachidonoylglycerol (2-AG). Preferentially hydrolyzes sn-1 fatty acids from diacylglycerols (DAG) that contain arachidonic acid (AA) esterified at the sn-2 position to biosynthesize 2-AG. Has negligible activity against other lipids including monoacylglycerols and phospholipids. Plays a key role in regulating 2-AG signaling in the CNS. Controls the activity of 2-AG as a retrograde messenger at neuronal synapses. Supports axonal growth during development and adult neurogenesis. Plays a role for eCB signaling in the physiological regulation of anxiety and depressive behaviors. Also regulates neuroinflammatory responses in the brain, in particular, LPS-induced microglial activation. The protein is Diacylglycerol lipase-alpha (Dagla) of Rattus norvegicus (Rat).